A 118-amino-acid chain; its full sequence is Large ribosomal subunit protein bL19 (118 aa).

The protein belongs to the bacterial ribosomal protein bL19 family.

This protein is located at the 30S-50S ribosomal subunit interface and may play a role in the structure and function of the aminoacyl-tRNA binding site. This chain is Large ribosomal subunit protein bL19, found in Geotalea daltonii (strain DSM 22248 / JCM 15807 / FRC-32) (Geobacter daltonii).